The primary structure comprises 73 residues: Small ribosomal subunit protein bS18 (73 aa).

Belongs to the bacterial ribosomal protein bS18 family. In terms of assembly, part of the 30S ribosomal subunit. Forms a tight heterodimer with protein bS6.

Functionally, binds as a heterodimer with protein bS6 to the central domain of the 16S rRNA, where it helps stabilize the platform of the 30S subunit. This chain is Small ribosomal subunit protein bS18, found in Synechococcus sp. (strain WH7803).